A 341-amino-acid polypeptide reads, in one-letter code: Anthranilate phosphoribosyltransferase (341 aa).

Residues Gly-79, Gly-82–Asp-83, Thr-87, Asn-89–Thr-92, Lys-107–Ser-115, and Ser-119 each bind 5-phospho-alpha-D-ribose 1-diphosphate. Anthranilate is bound at residue Gly-79. Ser-91 contacts Mg(2+). Asn-110 contacts anthranilate. Arg-165 is an anthranilate binding site. The Mg(2+) site is built by Asp-224 and Glu-225.

This sequence belongs to the anthranilate phosphoribosyltransferase family. In terms of assembly, homodimer. It depends on Mg(2+) as a cofactor.

It catalyses the reaction N-(5-phospho-beta-D-ribosyl)anthranilate + diphosphate = 5-phospho-alpha-D-ribose 1-diphosphate + anthranilate. It participates in amino-acid biosynthesis; L-tryptophan biosynthesis; L-tryptophan from chorismate: step 2/5. Catalyzes the transfer of the phosphoribosyl group of 5-phosphorylribose-1-pyrophosphate (PRPP) to anthranilate to yield N-(5'-phosphoribosyl)-anthranilate (PRA). The protein is Anthranilate phosphoribosyltransferase of Bacillus cereus (strain B4264).